A 596-amino-acid polypeptide reads, in one-letter code: MRTHYCNGIHEGLIGQTVTLCGWAQRRRDHGGVIFIDLRDREGLVQIVADPDQVDAFAAANECRSEFVLQVEGVLRARPAGTENPHMPSGKVELAAARIRILNRSEPVPFPLDEEDIAENLRLKYRYLDLRRPEMLHRLRLRHQVTRFVRGYLDNAGFIDVETPVLTRSTPEGARDYLVPSRTQPGHFFALPQSPQLFKQLLMVAGLDRYYQITKCFRDEDLRADRQPEFTQIDIEASFVDEEAVMGTAEPMIRGLFAEVLGVQLPDPFPRMTYRDAMHRFGVDRPDLRNPLELTELTDLMRAVDFKVFREAAERPHGRVACLRVPGGAQLSRAQIDAYTQFTAIYGARGLAWIKVNALDQGNEGLQSPIVKFLPEMVLSEILRRSGAAAGDILFFGADTAKIVNEALGNLRNRVAADLGLLEGEWCPVWITDFPMFDYDDKEDRWTSTHHPFTAPQTEHLETLGQDPGNALARAYDLVLNGNEIGGGSIRIHQEAVQEKVFAALGIGAEEARDKFGFLLDALHYGAPPHGGLAFGLDRLVMLLCGAETIRDVIAFPKTQKAGCLLTEAPGTVADKQLQELGIRLRPGVGGGVPNP.

Glu-172 lines the L-aspartate pocket. An aspartate region spans residues 196 to 199 (QLFK). Arg-218 contacts L-aspartate. Residues 218–220 (RDE) and Gln-227 each bind ATP. His-450 contacts L-aspartate. Position 484 (Glu-484) interacts with ATP. Arg-491 is a binding site for L-aspartate. 536–539 (GLDR) lines the ATP pocket.

It belongs to the class-II aminoacyl-tRNA synthetase family. Type 1 subfamily. As to quaternary structure, homodimer.

It localises to the cytoplasm. The catalysed reaction is tRNA(Asx) + L-aspartate + ATP = L-aspartyl-tRNA(Asx) + AMP + diphosphate. Aspartyl-tRNA synthetase with relaxed tRNA specificity since it is able to aspartylate not only its cognate tRNA(Asp) but also tRNA(Asn). Reaction proceeds in two steps: L-aspartate is first activated by ATP to form Asp-AMP and then transferred to the acceptor end of tRNA(Asp/Asn). The polypeptide is Aspartate--tRNA(Asp/Asn) ligase (Acidithiobacillus ferrooxidans (strain ATCC 23270 / DSM 14882 / CIP 104768 / NCIMB 8455) (Ferrobacillus ferrooxidans (strain ATCC 23270))).